We begin with the raw amino-acid sequence, 318 residues long: SPX domain-containing protein 4 (318 aa).

Residues 1–187 (MKFGKEFRTH…GGLLRLPFTQ (187 aa)) form the SPX domain. Residues 226 to 237 (SAVQAHSSSHQH) show a composition bias toward low complexity. Disordered regions lie at residues 226–247 (SAVQ…AETS) and 284–318 (SSLL…GPSH). Residues 305–318 (NKDDSEKEDTGPSH) are compositionally biased toward basic and acidic residues.

This is SPX domain-containing protein 4 (SPX4) from Arabidopsis thaliana (Mouse-ear cress).